The chain runs to 458 residues: Argininosuccinate lyase (458 aa).

It belongs to the lyase 1 family. Argininosuccinate lyase subfamily.

It localises to the cytoplasm. The enzyme catalyses 2-(N(omega)-L-arginino)succinate = fumarate + L-arginine. It functions in the pathway amino-acid biosynthesis; L-arginine biosynthesis; L-arginine from L-ornithine and carbamoyl phosphate: step 3/3. The chain is Argininosuccinate lyase from Haemophilus ducreyi (strain 35000HP / ATCC 700724).